The primary structure comprises 217 residues: Eukaryotic translation initiation factor 4E (217 aa).

Residues 1–30 form a disordered region; sequence MATVEPETTPTPNPPTTEEEKTESNQEVAN. At Ala2 the chain carries N-acetylalanine. Thr22 carries the post-translational modification Phosphothreonine. Residues 37 to 40 are EIF4EBP1/2/3 binding; the sequence is HPLQ. An mRNA-binding site is contributed by 56-57; the sequence is WQ. The segment at 73 to 77 is EIF4EBP1/2/3 binding; it reads WALYN. 102-103 lines the mRNA pocket; that stretch reads WE. Positions 132–139 are EIF4EBP1/2/3 binding; that stretch reads ETLLCLIG. MRNA-binding positions include 157–162 and 205–207; these read RAKGDK and TKS. Ser209 is subject to Phosphoserine; by PKC and MKNK2.

It belongs to the eukaryotic initiation factor 4E family. In terms of assembly, eIF4F is a multi-subunit complex, the composition of which varies with external and internal environmental conditions. It is composed of at least EIF4A, EIF4E and EIF4G1/EIF4G3. EIF4E is also known to interact with other partners. Interacts with EIF4ENIF1/4E-T; promotes recruitment to P-bodies and import into the nucleus. Hypophosphorylated EIF4EBP1, EIF4EBP2 and EIF4EBP3 compete with EIF4G1/EIF4G3 to interact with EIF4E; insulin stimulated MAP-kinase (MAPK1 and MAPK3) phosphorylation of EIF4EBP1 causes dissociation of the complex allowing EIF4G1/EIF4G3 to bind and consequent initiation of translation. Interacts mutually exclusive with EIF4A1 or EIF4A2. Interacts with NGDN and PIWIL2. Component of the CYFIP1-EIF4E-FMR1 complex composed of CYFIP, EIF4E and FMR1. Interacts directly with CYFIP1. Interacts with CLOCK. Binds to MKNK2 in nucleus. Interacts with LIMD1, WTIP and AJUBA. Interacts with APOBEC3G in an RNA-dependent manner. Interacts with LARP1. Interacts with METTL3. Interacts with RBM24; this interaction prevents EIF4E from binding to p53/TP53 mRNA and inhibits the assembly of translation initiation complex. Interacts with DDX3X; interaction is direct and in an RNA-independent manner; this interaction enhances EIF4E cap-binding ability and is required for the repression of cap-dependent translation and the increase of IRES-mediated translation. DDX3X competes with EIF4G1 for interaction with EIF4E. Interacts with EIF4G1; which in a mutual exclusive interaction associates either with EIF1 or with EIF4E on a common binding site. Interacts with BTG4 and CNOT7. Interacts with LRPPRC (via N-terminus); the interaction promotes association of EIF4E with 4ESE-containing mRNAs. Interacts with mRNA cleavage enzyme CPSF3 and its cofactor CPSF1. Interacts (via RING-type zinc finger) with PML; the interaction results in conformational changes of both interacting proteins and reduces EIF4E affinity for the 5' m7G cap of mRNA, thus reducing EIF4E-mediated mRNA nuclear export. Interacts with homeobox protein HHEX/PRH; the interaction inhibits EIF4E-mediated mRNA nuclear export. Interacts with homeobox protein HOXA9; the interaction positively regulates EIF4E-mediated mRNA nuclear export. Interacts with homeobox protein EMX2. As to quaternary structure, (Microbial infection) Interacts with Lassa virus Z protein. (Microbial infection) Interacts with Lymphocytic choriomeningitis virus (LCMV) Z protein (via RING-type zinc finger); the interaction results in conformational changes of both interacting proteins and reduces EIF4E affinity for the m7G mRNA cap structure. In terms of assembly, (Microbial infection) Interacts (via cap-binding region) with potato virus Y VPg; this interaction mediates the translation of the VPg-viral RNA conjugates and interferes with the cellular EIF4E-dependent mRNA export and translation. Phosphorylation increases the ability of the protein to bind to mRNA caps and to form the eIF4F complex. Phosphorylation also enhances its mRNA transport function. Phosphorylation at Ser-209 is not essential for protein synthesis.

The protein resides in the cytoplasm. The protein localises to the P-body. It is found in the stress granule. It localises to the nucleus. Its subcellular location is the nucleus speckle. The protein resides in the nuclear body. In terms of biological role, acts in the cytoplasm to initiate and regulate protein synthesis and is required in the nucleus for export of a subset of mRNAs from the nucleus to the cytoplasm which promotes processes such as RNA capping, processing and splicing. Component of the protein complex eIF4F, which is involved in the recognition of the mRNA cap, ATP-dependent unwinding of 5'-terminal secondary structure and recruitment of mRNA to the ribosome. This protein recognizes and binds the 7-methylguanosine (m7G)-containing mRNA cap during an early step in the initiation of protein synthesis and facilitates ribosome binding by inducing the unwinding of the mRNAs secondary structures. Together with EIF4G1, antagonizes the scanning promoted by EIF1-EIF4G1 and is required for TISU translation, a process where the TISU element recognition makes scanning unnecessary. In addition to its role in translation initiation, also acts as a regulator of translation and stability in the cytoplasm. Component of the CYFIP1-EIF4E-FMR1 complex which binds to the mRNA cap and mediates translational repression: in the complex, EIF4E mediates the binding to the mRNA cap. Component of a multiprotein complex that sequesters and represses translation of proneurogenic factors during neurogenesis. In P-bodies, component of a complex that mediates the storage of translationally inactive mRNAs in the cytoplasm and prevents their degradation. May play an important role in spermatogenesis through translational regulation of stage-specific mRNAs during germ cell development. As well as its roles in translation, also involved in mRNA nucleocytoplasmic transport. Its role in mRNA export from the nucleus to the cytoplasm relies on its ability to bind the m7G cap of RNAs and on the presence of the 50-nucleotide EIF4E sensitivity element (4ESE) in the 3'UTR of sensitive transcripts. Interaction with the 4ESE is mediated by LRPPRC which binds simultaneously to both EIF4E and the 4ESE, thereby acting as a platform for assembly for the RNA export complex. EIF4E-dependent mRNA export is independent of ongoing protein or RNA synthesis and is also NFX1-independent but is XPO1-dependent with LRPPRC interacting with XPO1 to form an EIF4E-dependent mRNA export complex. Alters the composition of the cytoplasmic face of the nuclear pore to promote RNA export by reducing RANBP2 expression, relocalizing nucleoporin NUP214 and increasing expression of RANBP1 and RNA export factors DDX19 and GLE1. Promotes the nuclear export of cyclin CCND1 mRNA. Promotes the nuclear export of NOS2/iNOS mRNA. Promotes the nuclear export of MDM2 mRNA. Promotes the export of additional mRNAs, including others involved in the cell cycle. In the nucleus, binds to capped splice factor-encoding mRNAs and stimulates their nuclear export to enhance splice factor production by increasing their cytoplasmic availability to the translation machinery. May also regulate splicing through interaction with the spliceosome in an RNA and m7G cap-dependent manner. Also binds to some pre-mRNAs and may play a role in their recruitment to the spliceosome. Promotes steady-state capping of a subset of coding and non-coding RNAs by mediating nuclear export of capping machinery mRNAs including RNMT, RNGTT and RAMAC to enhance their translation. Stimulates mRNA 3'-end processing by promoting the expression of several core cleavage complex factors required for mRNA cleavage and polyadenylation, and may also have a direct effect through its interaction with the CPSF3 cleavage enzyme. Rescues cells from apoptosis by promoting activation of serine/threonine-protein kinase AKT1 through mRNA export of NBS1 which potentiates AKT1 phosphorylation and also through mRNA export of AKT1 effectors, allowing for increased production of these proteins. This Homo sapiens (Human) protein is Eukaryotic translation initiation factor 4E.